The following is a 442-amino-acid chain: GTPase Der (442 aa).

EngA-type G domains are found at residues 2–167 and 175–351; these read RTIA…PIQN and FKFC…EQAM. GTP-binding positions include 8–15, 55–59, 119–122, 181–188, 228–232, and 293–296; these read GKPNVGKS, DTGGI, NKIE, GRPNVGKS, DTAGI, and NKWD. Residues 352-436 form the KH-like domain; it reads RKIATSLLND…PITLYWQDKN (85 aa).

The protein belongs to the TRAFAC class TrmE-Era-EngA-EngB-Septin-like GTPase superfamily. EngA (Der) GTPase family. Associates with the 50S ribosomal subunit.

GTPase that plays an essential role in the late steps of ribosome biogenesis. This Ureaplasma parvum serovar 3 (strain ATCC 27815 / 27 / NCTC 11736) protein is GTPase Der.